A 236-amino-acid polypeptide reads, in one-letter code: Small ribosomal subunit protein uS3 (236 aa).

In terms of domain architecture, KH type-2 spans 39–107; sequence IRKFLKKELY…EISINIKEVK (69 aa). Residues 213–229 are compositionally biased toward basic and acidic residues; it reads QPEKKEEAPARDKEGRG. Positions 213–236 are disordered; that stretch reads QPEKKEEAPARDKEGRGTRRRGRQ.

Belongs to the universal ribosomal protein uS3 family. In terms of assembly, part of the 30S ribosomal subunit. Forms a tight complex with proteins S10 and S14.

In terms of biological role, binds the lower part of the 30S subunit head. Binds mRNA in the 70S ribosome, positioning it for translation. The protein is Small ribosomal subunit protein uS3 of Wolinella succinogenes (strain ATCC 29543 / DSM 1740 / CCUG 13145 / JCM 31913 / LMG 7466 / NCTC 11488 / FDC 602W) (Vibrio succinogenes).